Reading from the N-terminus, the 282-residue chain is DNA-directed RNA polymerase III subunit RPC5 (282 aa).

The tract at residues 1–70 (MSIDNKLFVT…TGEEEEDDPV (70 aa)) is disordered. 2 stretches are compositionally biased toward acidic residues: residues 10-35 (TEED…DMIA) and 60-70 (DTGEEEEDDPV). Threonine 61 is subject to Phosphothreonine.

Component of the RNA polymerase III (Pol III) complex consisting of 17 subunits. Interacts with RPC53/RPC4. RPC53/RPC4, RPC37/RPC5 and RPC11/RPC10 probably form a Pol III subcomplex.

The protein resides in the nucleus. Functionally, DNA-dependent RNA polymerase catalyzes the transcription of DNA into RNA using the four ribonucleoside triphosphates as substrates. Specific peripheric component of RNA polymerase III which synthesizes small RNAs, such as 5S rRNA and tRNAs. The RPC53/RPC4-RPC37/RPC5 subcomplex is required for terminator recognition and reinitiation. The chain is DNA-directed RNA polymerase III subunit RPC5 (RPC37) from Saccharomyces cerevisiae (strain ATCC 204508 / S288c) (Baker's yeast).